We begin with the raw amino-acid sequence, 325 residues long: MRGDDRHNGGYCAPPARLPVPALTAILELRKVRKQYGDTVVVNDLDLQVHRGQCFGLLGPNGAGKTTTLRLLLGLTTPAGGSLTLCGEPIPERAPQARMRVGVVPQFDNLDPDFSVIENLRIFGRYFGLSSAVIERRVPALLEFARLENRANAQVRDLSGGMRRRLTVARALINDPDLLIMDEPTTGLDPQARHLIWERLKSLMASGKTILLTTHFMEEAERLCNYLCVIDGGRKIAEGKPHDLIDSQIGCDVVEVYGDELDTLRGSLTPLAERTEMSGETLFCYVREPAPLLAALHGQSGVRYLHRPANLEDVFLKLTGREMRD.

Residues 27–257 (LELRKVRKQY…QIGCDVVEVY (231 aa)) enclose the ABC transporter domain. 59 to 66 (GPNGAGKT) serves as a coordination point for ATP.

It belongs to the ABC transporter superfamily. Lipooligosaccharide exporter (TC 3.A.1.102) family. As to quaternary structure, the complex is composed of two ATP-binding proteins (NodI) and two transmembrane proteins (NodJ).

The protein localises to the cell inner membrane. Functionally, part of the ABC transporter complex NodIJ involved in the export of the nodulation factors (Nod factors), the bacterial signal molecules that induce symbiosis and subsequent nodulation induction. Nod factors are LCO (lipo-chitin oligosaccharide), a modified beta-1,4-linked N-acetylglucosamine oligosaccharide. This subunit is responsible for energy coupling to the transport system. The sequence is that of Nod factor export ATP-binding protein I from Cupriavidus pinatubonensis (strain JMP 134 / LMG 1197) (Cupriavidus necator (strain JMP 134)).